A 337-amino-acid polypeptide reads, in one-letter code: Nucleoid-associated protein Avin_11450 (337 aa).

This sequence belongs to the YejK family.

The protein resides in the cytoplasm. It is found in the nucleoid. The sequence is that of Nucleoid-associated protein Avin_11450 from Azotobacter vinelandii (strain DJ / ATCC BAA-1303).